The chain runs to 458 residues: MSLGTVVEVIGAVVDVEFPRDSVPKVNDALKLVDSDLVFEVQQQLGDGVVRTIAMGTTDGLKRGLKAENTGHPIQVPVGKKTLGRIMDVLGRPVDDAGPIDAEETWAIHRKAPSYEEQAGSQELLETGIKVIDLLCPFAKGGKVGLFGGAGVGKTVNMMELIRNIAIEHSGYSVFAGVGERTREGNDFYHEMKDSNVLDKVSLVYGQMNEPPGNRLRVALTGLTMAEKFRDEGRDVLLFIDNIYRYTLAGVEVSALLGRMPSAVGYQPTLAEEMGMLQERITSTKTGSITSIQAVYVPADDLTDPSPATTFAHLDATVVLSRQIAELGIYPAVDPLDSTSRQLDPLIVGQEHYDTARRVQQTLQRYKELKDIIAILGMDELSEEDKRVVTRARKIQRFLSQPFFVAEVFTGSPGKYVSLKDTIKGFQGILAGEYDDLPEQAFYMVGSIEEAVAKAKTL.

Position 148-155 (148-155 (GGAGVGKT)) interacts with ATP.

The protein belongs to the ATPase alpha/beta chains family. In terms of assembly, F-type ATPases have 2 components, CF(1) - the catalytic core - and CF(0) - the membrane proton channel. CF(1) has five subunits: alpha(3), beta(3), gamma(1), delta(1), epsilon(1). CF(0) has three main subunits: a(1), b(2) and c(9-12). The alpha and beta chains form an alternating ring which encloses part of the gamma chain. CF(1) is attached to CF(0) by a central stalk formed by the gamma and epsilon chains, while a peripheral stalk is formed by the delta and b chains.

Its subcellular location is the cell inner membrane. It catalyses the reaction ATP + H2O + 4 H(+)(in) = ADP + phosphate + 5 H(+)(out). Functionally, produces ATP from ADP in the presence of a proton gradient across the membrane. The catalytic sites are hosted primarily by the beta subunits. The chain is ATP synthase subunit beta from Legionella pneumophila (strain Paris).